The primary structure comprises 474 residues: Methylenetetrahydrofolate--tRNA-(uracil-5-)-methyltransferase TrmFO (474 aa).

FAD is bound at residue glycine 13–glycine 18.

This sequence belongs to the MnmG family. TrmFO subfamily. FAD serves as cofactor.

The protein resides in the cytoplasm. The enzyme catalyses uridine(54) in tRNA + (6R)-5,10-methylene-5,6,7,8-tetrahydrofolate + NADH + H(+) = 5-methyluridine(54) in tRNA + (6S)-5,6,7,8-tetrahydrofolate + NAD(+). It carries out the reaction uridine(54) in tRNA + (6R)-5,10-methylene-5,6,7,8-tetrahydrofolate + NADPH + H(+) = 5-methyluridine(54) in tRNA + (6S)-5,6,7,8-tetrahydrofolate + NADP(+). Functionally, catalyzes the folate-dependent formation of 5-methyl-uridine at position 54 (M-5-U54) in all tRNAs. This Bartonella tribocorum (strain CIP 105476 / IBS 506) protein is Methylenetetrahydrofolate--tRNA-(uracil-5-)-methyltransferase TrmFO.